Here is a 648-residue protein sequence, read N- to C-terminus: Replication restart protein PriA (648 aa).

In terms of domain architecture, Helicase ATP-binding spans 131-297 (TILNESNKPT…EIGKYQLVTL (167 aa)). ATP is bound at residue 144-151 (GVTGSGKT). The DEAH box motif lies at 240-243 (DEEH). Residues cysteine 358, cysteine 361, cysteine 367, cysteine 370, cysteine 385, cysteine 388, cysteine 398, and cysteine 401 each coordinate Zn(2+). The region spanning 393 to 548 (KIFSSCPECL…SFFANELEIR (156 aa)) is the Helicase C-terminal domain.

Belongs to the helicase family. PriA subfamily. In terms of assembly, component of the replication restart primosome. Requires Zn(2+) as cofactor.

It catalyses the reaction Couples ATP hydrolysis with the unwinding of duplex DNA by translocating in the 3'-5' direction.. The catalysed reaction is ATP + H2O = ADP + phosphate + H(+). Initiates the restart of stalled replication forks, which reloads the replicative helicase on sites other than the origin of replication. Recognizes and binds to abandoned replication forks and remodels them to uncover a helicase loading site. Promotes assembly of the primosome at these replication forks. The polypeptide is Replication restart protein PriA (Rickettsia felis (strain ATCC VR-1525 / URRWXCal2) (Rickettsia azadi)).